The primary structure comprises 266 residues: Signal peptidase I (266 aa).

Residues Met1 to Ser20 are Cytoplasmic-facing. Residues Phe21–Val41 traverse the membrane as a helical segment. Topologically, residues Pro42–Ala266 are periplasmic. Residues Ser45 and Lys108 contribute to the active site.

The protein belongs to the peptidase S26 family.

The protein localises to the cell inner membrane. It carries out the reaction Cleavage of hydrophobic, N-terminal signal or leader sequences from secreted and periplasmic proteins.. Its function is as follows. Complements E.coli mutants temperature-sensitive for LepB function. In Rickettsia rickettsii (strain Sheila Smith), this protein is Signal peptidase I (lepB).